The sequence spans 335 residues: Protein-arginine kinase (335 aa).

Residues 21 to 244 (VIISSRIRLA…NQIINEEKQI (224 aa)) form the Phosphagen kinase C-terminal domain. ATP contacts are provided by residues 24–28 (SSRIR), His-82, Arg-115, 166–170 (RASVM), and 197–202 (RGIYGE).

Belongs to the ATP:guanido phosphotransferase family.

It carries out the reaction L-arginyl-[protein] + ATP = N(omega)-phospho-L-arginyl-[protein] + ADP + H(+). Its function is as follows. Catalyzes the specific phosphorylation of arginine residues in proteins. The polypeptide is Protein-arginine kinase (Staphylococcus epidermidis (strain ATCC 12228 / FDA PCI 1200)).